Consider the following 411-residue polypeptide: Alpha-1-antitrypsin 1-6 (411 aa).

Positions 1–25 are cleaved as a signal peptide; that stretch reads MTTPFSSHGLLLLVGLCCLLLITKT. N-linked (GlcNAc...) asparagine glycans are attached at residues Asn-50, Asn-89, Asn-101, and Asn-164.

This sequence belongs to the serpin family. In terms of tissue distribution, expressed predominantly in epididymis where it is found in the epithelial cells of the caput, corpus and cauda epididymis.

It is found in the secreted. Functionally, inhibitor of serine proteases. This Mus musculus (Mouse) protein is Alpha-1-antitrypsin 1-6.